Here is a 546-residue protein sequence, read N- to C-terminus: MSDAQAPPASTSWADMVDEDEKQKQEQNMSNQNDGWGETATETSAPAPPPASAPVSSSNNDGWGEPAPSAPADNGWADAGASNGGSGANNNDGWFDAPVPPSSQPPKKEASDIQLQDDTEGLITNTFQVEVKLADLQGDPNSPLYSVQSFKELNLHEDLMKGIIAAGFQKPSKIQEKALPLLLSNPPRNLIGQSQSGTGKTAAFTLNMLSRVDPTIPTPQAICIAPSRELARQIQEVVDQIGQFTQVGTFLAIPGSWSRNSRIDKQILIGTPGTLVDMLMRGSRILDPRMIRVLVLDEADELIAQQGLGEQTFRIKQLLPPNVQNVLFSATFNDDVQEFADRFAPEANKIFLRKEDITVDAIRQLYLECDSEDQKYEALSALYDCLVIGQSIVFCKRKVTADHIAERLISEGHAVASLHGDKLSQERDAILDGFRNGETKVLITTNVIARGIDIPAVNMVVNYDVPDLGPGGNGPDIETYIHRIGRTGRFGRKGCSVIFTHDYRSKSDVERIMNTLGKPMKKIDARSTTDIEQLEKALKLAMKGPA.

Residues 1-113 form a disordered region; that stretch reads MSDAQAPPAS…QPPKKEASDI (113 aa). The segment covering 72–81 has biased composition (low complexity); sequence ADNGWADAGA. The Q motif signature appears at 148 to 176; the sequence is QSFKELNLHEDLMKGIIAAGFQKPSKIQE. In terms of domain architecture, Helicase ATP-binding spans 181-350; it reads LLLSNPPRNL…DRFAPEANKI (170 aa). 194-201 provides a ligand contact to ATP; sequence SQSGTGKT. The DEAD box motif lies at 297 to 300; sequence DEAD. The Helicase C-terminal domain maps to 361-531; the sequence is AIRQLYLECD…KIDARSTTDI (171 aa).

This sequence belongs to the DEAD box helicase family. DDX19/DBP5 subfamily. As to quaternary structure, associates with the nuclear pore complex.

It is found in the cytoplasm. The protein resides in the nucleus. Its subcellular location is the nuclear pore complex. It localises to the nucleus membrane. It catalyses the reaction ATP + H2O = ADP + phosphate + H(+). Functionally, ATP-dependent RNA helicase associated with the nuclear pore complex and essential for mRNA export from the nucleus. May participate in a terminal step of mRNA export through the removal of proteins that accompany mRNA through the nucleopore complex. May also be involved in early transcription. This Cryptococcus neoformans var. neoformans serotype D (strain B-3501A) (Filobasidiella neoformans) protein is ATP-dependent RNA helicase DBP5 (DBP5).